A 130-amino-acid chain; its full sequence is Small ribosomal subunit protein uS11 (130 aa).

It belongs to the universal ribosomal protein uS11 family. In terms of assembly, part of the 30S ribosomal subunit. Interacts with proteins S7 and S18. Binds to IF-3.

In terms of biological role, located on the platform of the 30S subunit, it bridges several disparate RNA helices of the 16S rRNA. Forms part of the Shine-Dalgarno cleft in the 70S ribosome. This is Small ribosomal subunit protein uS11 from Xylella fastidiosa (strain 9a5c).